The primary structure comprises 150 residues: Large ribosomal subunit protein bL9 (150 aa).

This sequence belongs to the bacterial ribosomal protein bL9 family.

Binds to the 23S rRNA. This chain is Large ribosomal subunit protein bL9, found in Cupriavidus metallidurans (strain ATCC 43123 / DSM 2839 / NBRC 102507 / CH34) (Ralstonia metallidurans).